We begin with the raw amino-acid sequence, 234 residues long: MLTYETWEENDVSFSEEDETKGALSALSWAYKEYKSEIVYACSFGVEGMVLLHLINQVNPSAKVVFLDTNVHFQETYELIQKVRERFPSLNIIEKQPKLTLDEQANLHGNKLWESNPNLCCNIRKILPLEESLANEKAWISGLRREQSETRKHTKFINQDHRFQSIKVCPLIHWTWKEVWRYVYKHSLPYNPLHDIGYPSIGCEKCTLPVGEGGDSRDGRWAGKVKTECGLHYQ.

Cys120, Cys121, Cys203, and Cys206 together coordinate [4Fe-4S] cluster. Cys229 (nucleophile; cysteine thiosulfonate intermediate) is an active-site residue.

It belongs to the PAPS reductase family. CysH subfamily. Requires [4Fe-4S] cluster as cofactor.

The protein resides in the cytoplasm. The enzyme catalyses [thioredoxin]-disulfide + sulfite + AMP + 2 H(+) = adenosine 5'-phosphosulfate + [thioredoxin]-dithiol. Its pathway is sulfur metabolism; hydrogen sulfide biosynthesis; sulfite from sulfate. Functionally, catalyzes the formation of sulfite from adenosine 5'-phosphosulfate (APS) using thioredoxin as an electron donor. In Bacillus cereus (strain Q1), this protein is Adenosine 5'-phosphosulfate reductase.